Here is a 265-residue protein sequence, read N- to C-terminus: Beta-lactamase OXA-48 (265 aa).

An N-terminal signal peptide occupies residues 1 to 22 (MRVLALSAVFLVASIIGMPAVA). Residue S70 is the Acyl-ester intermediate of the active site. Residues S70, K73, S118, and R250 each contribute to the a beta-lactam site. K73 carries the N6-carboxylysine modification.

It belongs to the class-D beta-lactamase family. Monomer. Dimer. Carboxylated on the epsilon-amino group of a lysine, with the resulting carbamate functional group serving as a general base. Probably N-carboxylated at Lys-73 at neutral pH in vivo and undergoes complete N-decarboxylation, at pH 4.1, in vitro.

It catalyses the reaction a beta-lactam + H2O = a substituted beta-amino acid. Inhibited by avibactam, related diazabicyclooctane (DBO) derivatives and by bicyclic boronic acids, via a covalent binding to Ser-70. Inhibited by chloride, bromide and iodide ions. Not inhibited by the beta-lactamase-blocking agents, clavulanic acid or tazobactam. In terms of biological role, class D beta-lactamase which confers resistance to the beta-lactam antibiotics, including amoxicillin, and moderate resistance to cephalosporins and carbapenems such as cephalothin and imipenem; in the DH10B strain of E.coli. Acts via hydrolysis of the beta-lactam ring. Has oxacillin-, cephalothin- and imipenem-hydrolyzing activities. The sequence is that of Beta-lactamase OXA-48 from Klebsiella pneumoniae.